We begin with the raw amino-acid sequence, 364 residues long: Fructose-bisphosphate aldolase C-A (364 aa).

The substrate site is built by Arg56 and Lys147. The active-site Proton acceptor is the Glu188. Lys230 serves as the catalytic Schiff-base intermediate with dihydroxyacetone-P.

It belongs to the class I fructose-bisphosphate aldolase family. In terms of assembly, homotetramer. Expressed specifically in Purkinje cells in the brain.

It carries out the reaction beta-D-fructose 1,6-bisphosphate = D-glyceraldehyde 3-phosphate + dihydroxyacetone phosphate. It participates in carbohydrate degradation; glycolysis; D-glyceraldehyde 3-phosphate and glycerone phosphate from D-glucose: step 4/4. This Danio rerio (Zebrafish) protein is Fructose-bisphosphate aldolase C-A.